Here is a 193-residue protein sequence, read N- to C-terminus: Interleukin-18 (193 aa).

Positions Met1–Asp36 are excised as a propeptide.

Belongs to the IL-1 family. As to quaternary structure, forms a ternary complex with ligand-binding receptor subunit IL18R1 and signaling receptor subunit IL18RAP at the plasma membrane. Mature IL18 first binds to IL18R1 forming a low affinity binary complex, which then interacts with IL18RAP to form a high affinity ternary complex that signals inside the cell. Interacts with cargo receptor TMED10; the interaction mediates the translocation from the cytoplasm into the ERGIC (endoplasmic reticulum-Golgi intermediate compartment) and thereby secretion. Post-translationally, the pro-IL-18 precursor is processed by CASP1, CASP4 or CASP5 to yield its mature, active form. The pro-IL-18 precursor features autoinhibitory interactions between the propeptide and the post-cleavage-site region, preventing recognition by the IL18R1 receptor. Processing by CASP1, CASP4 or CASP5 induces conformational changes to generate critical receptor-binding sites. The mature form is then secreted and released in the extracellular milieu by passing through the gasdermin-D (GSDMD) pore. In contrast, cleavage by CASP3 inactivates IL18.

It is found in the cytoplasm. The protein resides in the cytosol. It localises to the secreted. In terms of biological role, pro-inflammatory cytokine primarily involved in epithelial barrier repair, polarized T-helper 1 (Th1) cell and natural killer (NK) cell immune responses. Upon binding to IL18R1 and IL18RAP, forms a signaling ternary complex which activates NF-kappa-B, triggering synthesis of inflammatory mediators. Synergizes with IL12/interleukin-12 to induce IFNG synthesis from T-helper 1 (Th1) cells and natural killer (NK) cells. Involved in transduction of inflammation downstream of pyroptosis: its mature form is specifically released in the extracellular milieu by passing through the gasdermin-D (GSDMD) pore. In Bos taurus (Bovine), this protein is Interleukin-18 (IL18).